The sequence spans 202 residues: Large ribosomal subunit protein bL25 (202 aa).

The segment at 182-202 is disordered; the sequence is EVEAEETEDDEAASEGEEAAE. Over residues 183-202 the composition is skewed to acidic residues; that stretch reads VEAEETEDDEAASEGEEAAE.

The protein belongs to the bacterial ribosomal protein bL25 family. CTC subfamily. Part of the 50S ribosomal subunit; part of the 5S rRNA/L5/L18/L25 subcomplex. Contacts the 5S rRNA. Binds to the 5S rRNA independently of L5 and L18.

Its function is as follows. This is one of the proteins that binds to the 5S RNA in the ribosome where it forms part of the central protuberance. The chain is Large ribosomal subunit protein bL25 from Corynebacterium glutamicum (strain R).